Reading from the N-terminus, the 86-residue chain is Protein Tat (86 aa).

Residues 1–21 (MDPVDPNIEPWNHPGSQPKTA) are disordered. The interval 1–24 (MDPVDPNIEPWNHPGSQPKTACNR) is interaction with human CREBBP. The transactivation stretch occupies residues 1 to 48 (MDPVDPNIEPWNHPGSQPKTACNRCHCKKCCYHCQVCFITKGLGISYG). Cysteine 22, cysteine 25, and cysteine 27 together coordinate Zn(2+). The cysteine-rich stretch occupies residues 22–37 (CNRCHCKKCCYHCQVC). Position 28 is an N6-acetyllysine; by host PCAF (lysine 28). 4 residues coordinate Zn(2+): cysteine 30, histidine 33, cysteine 34, and cysteine 37. Positions 38 to 48 (FITKGLGISYG) are core. The disordered stretch occupies residues 47-86 (YGRKKRRQRRRPSQGGQTHQDPIPKQPSSQPRGDPTGPKE). Over residues 48–58 (GRKKRRQRRRP) the composition is skewed to basic residues. Positions 49–57 (RKKRRQRRR) match the Nuclear localization signal, RNA-binding (TAR), and protein transduction motif. The tract at residues 49–86 (RKKRRQRRRPSQGGQTHQDPIPKQPSSQPRGDPTGPKE) is interaction with the host capping enzyme RNGTT. An N6-acetyllysine; by host EP300 and GCN5L2 mark is found at lysine 50 and lysine 51. 2 positions are modified to asymmetric dimethylarginine; by host PRMT6: arginine 52 and arginine 53. Residues 60–77 (QGGQTHQDPIPKQPSSQP) are compositionally biased toward polar residues. Lysine 71 participates in a covalent cross-link: Glycyl lysine isopeptide (Lys-Gly) (interchain with G-Cter in ubiquitin). Positions 78–80 (RGD) match the Cell attachment site motif.

Belongs to the lentiviruses Tat family. Interacts with host CCNT1. Associates with the P-TEFb complex composed at least of Tat, P-TEFb (CDK9 and CCNT1), TAR RNA, RNA Pol II. Recruits the HATs CREBBP, TAF1/TFIID, EP300, PCAF and GCN5L2. Interacts with host KAT5/Tip60; this interaction targets the latter to degradation. Interacts with the host deacetylase SIRT1. Interacts with host capping enzyme RNGTT; this interaction stimulates RNGTT. Binds to host KDR, and to the host integrins ITGAV/ITGB3 and ITGA5/ITGB1. Interacts with host KPNB1/importin beta-1 without previous binding to KPNA1/importin alpha-1. Interacts with EIF2AK2. Interacts with host nucleosome assembly protein NAP1L1; this interaction may be required for the transport of Tat within the nucleus, since the two proteins interact at the nuclear rim. Interacts with host C1QBP/SF2P32; this interaction involves lysine-acetylated Tat. Interacts with the host chemokine receptors CCR2, CCR3 and CXCR4. Interacts with host DPP4/CD26; this interaction may trigger an anti-proliferative effect. Interacts with host LDLR. Interacts with the host extracellular matrix metalloproteinase MMP1. Interacts with host PRMT6; this interaction mediates Tat's methylation. Interacts with, and is ubiquitinated by MDM2/Hdm2. Interacts with host PSMC3 and HTATIP2. Interacts with STAB1; this interaction may overcome SATB1-mediated repression of IL2 and IL2RA (interleukin) in T cells by binding to the same domain than HDAC1. Interacts (when acetylated) with human CDK13, thereby increasing HIV-1 mRNA splicing and promoting the production of the doubly spliced HIV-1 protein Nef. Interacts with host TBP; this interaction modulates the activity of transcriptional pre-initiation complex. Interacts with host RELA. Interacts with host PLSCR1; this interaction negatively regulates Tat transactivation activity by altering its subcellular distribution. In terms of processing, asymmetrical arginine methylation by host PRMT6 seems to diminish the transactivation capacity of Tat and affects the interaction with host CCNT1. Post-translationally, acetylation by EP300, CREBBP, GCN5L2/GCN5 and PCAF regulates the transactivation activity of Tat. EP300-mediated acetylation of Lys-50 promotes dissociation of Tat from the TAR RNA through the competitive binding to PCAF's bromodomain. In addition, the non-acetylated Tat's N-terminus can also interact with PCAF. PCAF-mediated acetylation of Lys-28 enhances Tat's binding to CCNT1. Lys-50 is deacetylated by SIRT1. Polyubiquitination by host MDM2 does not target Tat to degradation, but activates its transactivation function and fosters interaction with CCNT1 and TAR RNA. In terms of processing, phosphorylated by EIF2AK2 on serine and threonine residues adjacent to the basic region important for TAR RNA binding and function. Phosphorylation of Tat by EIF2AK2 is dependent on the prior activation of EIF2AK2 by dsRNA.

It localises to the host nucleus. Its subcellular location is the host nucleolus. The protein resides in the host cytoplasm. It is found in the secreted. Its function is as follows. Transcriptional activator that increases RNA Pol II processivity, thereby increasing the level of full-length viral transcripts. Recognizes a hairpin structure at the 5'-LTR of the nascent viral mRNAs referred to as the transactivation responsive RNA element (TAR) and recruits the cyclin T1-CDK9 complex (P-TEFb complex) that will in turn hyperphosphorylate the RNA polymerase II to allow efficient elongation. The CDK9 component of P-TEFb and other Tat-activated kinases hyperphosphorylate the C-terminus of RNA Pol II that becomes stabilized and much more processive. Other factors such as HTATSF1/Tat-SF1, SUPT5H/SPT5, and HTATIP2 are also important for Tat's function. Besides its effect on RNA Pol II processivity, Tat induces chromatin remodeling of proviral genes by recruiting the histone acetyltransferases (HATs) CREBBP, EP300 and PCAF to the chromatin. This also contributes to the increase in proviral transcription rate, especially when the provirus integrates in transcriptionally silent region of the host genome. To ensure maximal activation of the LTR, Tat mediates nuclear translocation of NF-kappa-B by interacting with host RELA. Through its interaction with host TBP, Tat may also modulate transcription initiation. Tat can reactivate a latently infected cell by penetrating in it and transactivating its LTR promoter. In the cytoplasm, Tat is thought to act as a translational activator of HIV-1 mRNAs. In terms of biological role, extracellular circulating Tat can be endocytosed by surrounding uninfected cells via the binding to several surface receptors such as CD26, CXCR4, heparan sulfate proteoglycans (HSPG) or LDLR. Neurons are rarely infected, but they internalize Tat via their LDLR. Through its interaction with nuclear HATs, Tat is potentially able to control the acetylation-dependent cellular gene expression. Modulates the expression of many cellular genes involved in cell survival, proliferation or in coding for cytokines or cytokine receptors. Tat plays a role in T-cell and neurons apoptosis. Tat induced neurotoxicity and apoptosis probably contribute to neuroAIDS. Circulating Tat also acts as a chemokine-like and/or growth factor-like molecule that binds to specific receptors on the surface of the cells, affecting many cellular pathways. In the vascular system, Tat binds to ITGAV/ITGB3 and ITGA5/ITGB1 integrins dimers at the surface of endothelial cells and competes with bFGF for heparin-binding sites, leading to an excess of soluble bFGF. The chain is Protein Tat from Human immunodeficiency virus type 1 group M subtype D (isolate Z2/CDC-Z34) (HIV-1).